Reading from the N-terminus, the 541-residue chain is GTPase Obg (541 aa).

The Obg domain maps to 2 to 159 (PTFVDRVVLH…LDAVLELKSV (158 aa)). The disordered stretch occupies residues 63 to 84 (HPHQRAGGGRPGQGSNRHGADG). Positions 160-332 (ADVALVGFPS…LALALAELVA (173 aa)) constitute an OBG-type G domain. Residues 166 to 173 (GFPSAGKS), 191 to 195 (FTTLV), 213 to 216 (DVPG), 284 to 287 (NKVD), and 313 to 315 (STA) each bind GTP. Mg(2+)-binding residues include Ser173 and Thr193. In terms of domain architecture, OCT spans 350–427 (PRAVDEPDFT…IGAVTFDWEP (78 aa)). Positions 497–541 (KRLTRAQRTALSDSADDFDDGAGFSDSAAFGDSGGSGGDADGGRG) are disordered. The segment covering 517 to 527 (GAGFSDSAAFG) has biased composition (low complexity). Positions 528–541 (DSGGSGGDADGGRG) are enriched in gly residues.

Belongs to the TRAFAC class OBG-HflX-like GTPase superfamily. OBG GTPase family. As to quaternary structure, monomer. It depends on Mg(2+) as a cofactor.

It is found in the cytoplasm. An essential GTPase which binds GTP, GDP and possibly (p)ppGpp with moderate affinity, with high nucleotide exchange rates and a fairly low GTP hydrolysis rate. Plays a role in control of the cell cycle, stress response, ribosome biogenesis and in those bacteria that undergo differentiation, in morphogenesis control. The sequence is that of GTPase Obg from Parafrankia sp. (strain EAN1pec).